Here is a 112-residue protein sequence, read N- to C-terminus: Na(+)/H(+) antiporter subunit C (112 aa).

3 helical membrane passes run 4 to 21 (LMSI…YLIL), 28 to 50 (VVVG…AGLQ), and 70 to 92 (QALI…VLAY).

It belongs to the CPA3 antiporters (TC 2.A.63) subunit C family. As to quaternary structure, forms a heterooligomeric complex that consists of seven subunits: MrpA, MrpB, MrpC, MrpD, MrpE, MrpF and MrpG.

It localises to the cell membrane. Its function is as follows. Mnh complex is a Na(+)Li(+)/H(+) antiporter involved in Na(+) and/or Li(+) excretion and Na(+) resistance. Na(+)/H(+) antiport consumes a transmembrane electrical potential, and is thus inferred to be electrogenic. Does not transport K(+), Ca(2+) or Mg(2+). This is Na(+)/H(+) antiporter subunit C (mrpC) from Alkalihalophilus pseudofirmus (strain ATCC BAA-2126 / JCM 17055 / OF4) (Bacillus pseudofirmus).